The chain runs to 620 residues: Acetylcholinesterase 1 (620 aa).

An N-terminal signal peptide occupies residues 1–31; that stretch reads MRNSLLFFIFLPSTILAVDLIHLHDGSPLFG. N-linked (GlcNAc...) asparagine glycosylation occurs at Asn74. Cys82 and Cys109 are disulfide-bonded. The Acyl-ester intermediate role is filled by Ser216. An intrachain disulfide couples Cys270 to Cys286. Residue Asn272 is glycosylated (N-linked (GlcNAc...) asparagine). Catalysis depends on charge relay system residues Glu346 and His468. A disulfide bridge connects residues Cys430 and Cys558. Asn486 and Asn536 each carry an N-linked (GlcNAc...) asparagine glycan.

The protein belongs to the type-B carboxylesterase/lipase family. Oligomer composed of disulfide-linked homodimers.

It is found in the synapse. It localises to the secreted. The protein localises to the cell membrane. The enzyme catalyses acetylcholine + H2O = choline + acetate + H(+). In terms of biological role, rapidly hydrolyzes acetylcholine and releases choline into the synapse. It can hydrolyze propionylcholine and butyrylthiocholine in vitro. The chain is Acetylcholinesterase 1 (ace-1) from Caenorhabditis elegans.